A 475-amino-acid chain; its full sequence is Integrator complex subunit 15 (475 aa).

The interval 402–444 (YPHIHPGRPSPLSPHSPHQSTLSSPHSPHTVLTAHPTHPALAP) is disordered. Over residues 416–430 (HSPHQSTLSSPHSPH) the composition is skewed to low complexity.

This sequence belongs to the Integrator subunit 15 family. In terms of assembly, component of the Integrator complex, composed of core subunits INTS1, INTS2, INTS3, INTS4, INTS5, INTS6, INTS7, INTS8, INTS9/RC74, INTS10, INTS11/CPSF3L, INTS12, INTS13, INTS14 and INTS15. The core complex associates with protein phosphatase 2A subunits PPP2CA and PPP2R1A, to form the Integrator-PP2A (INTAC) complex. INTS15 is part of the tail subcomplex, composed of INTS10, INTS13, INTS14 and INTS15.

The protein resides in the nucleus. The protein localises to the chromosome. Functionally, component of the integrator complex, a multiprotein complex that terminates RNA polymerase II (Pol II) transcription in the promoter-proximal region of genes. The integrator complex provides a quality checkpoint during transcription elongation by driving premature transcription termination of transcripts that are unfavorably configured for transcriptional elongation: the complex terminates transcription by (1) catalyzing dephosphorylation of the C-terminal domain (CTD) of Pol II subunit POLR2A/RPB1 and SUPT5H/SPT5, (2) degrading the exiting nascent RNA transcript via endonuclease activity and (3) promoting the release of Pol II from bound DNA. The integrator complex is also involved in terminating the synthesis of non-coding Pol II transcripts, such as enhancer RNAs (eRNAs), small nuclear RNAs (snRNAs), telomerase RNAs and long non-coding RNAs (lncRNAs). INTS15 is part of the integrator tail module that acts as a platform for the recruitment of transcription factors at promoters. Within the integrator complex, INTS15 is required to bridge different integrator modules. The polypeptide is Integrator complex subunit 15 (ints15) (Danio rerio (Zebrafish)).